We begin with the raw amino-acid sequence, 176 residues long: MNRFSKTQIYLHWITLLFVAITYAAMELRGWFPKGSSTYLLMRETHYNAGIFVWVLMFSRLIIKHRYSDPSIVPPPPAWQMKAASLMHIMLYITFLALPLLGIALMAYSGKSWSFLGFNVSPFVTPNSEIKALIKNIHETWANIGYFLIAAHAGAALFHHYIQKDNTLLRMMPRRK.

Residues 1 to 7 are Cytoplasmic-facing; it reads MNRFSKT. The helical transmembrane segment at 8–28 threads the bilayer; it reads QIYLHWITLLFVAITYAAMEL. H12 is a heme b binding site. Topologically, residues 29 to 45 are periplasmic; that stretch reads RGWFPKGSSTYLLMRET. Residue H46 participates in heme b binding. A helical membrane pass occupies residues 46–63; the sequence is HYNAGIFVWVLMFSRLII. Residues 64–85 are Cytoplasmic-facing; that stretch reads KHRYSDPSIVPPPPAWQMKAAS. Residues 86 to 106 traverse the membrane as a helical segment; the sequence is LMHIMLYITFLALPLLGIALM. The Periplasmic segment spans residues 107-141; the sequence is AYSGKSWSFLGFNVSPFVTPNSEIKALIKNIHETW. 2 residues coordinate heme b: H138 and H152. The helical transmembrane segment at 142-162 threads the bilayer; that stretch reads ANIGYFLIAAHAGAALFHHYI. Over 163–176 the chain is Cytoplasmic; it reads QKDNTLLRMMPRRK.

Belongs to the cytochrome b561 family. Heme b serves as cofactor.

It is found in the cell inner membrane. In Escherichia coli (strain K12), this protein is Cytochrome b561 homolog 1 (yodB).